The primary structure comprises 171 residues: Large ribosomal subunit protein uL10 (171 aa).

Belongs to the universal ribosomal protein uL10 family. In terms of assembly, part of the ribosomal stalk of the 50S ribosomal subunit. The N-terminus interacts with L11 and the large rRNA to form the base of the stalk. The C-terminus forms an elongated spine to which L12 dimers bind in a sequential fashion forming a multimeric L10(L12)X complex.

In terms of biological role, forms part of the ribosomal stalk, playing a central role in the interaction of the ribosome with GTP-bound translation factors. This is Large ribosomal subunit protein uL10 from Corynebacterium glutamicum (strain ATCC 13032 / DSM 20300 / JCM 1318 / BCRC 11384 / CCUG 27702 / LMG 3730 / NBRC 12168 / NCIMB 10025 / NRRL B-2784 / 534).